The chain runs to 108 residues: Phosphoribosyl-ATP pyrophosphatase (108 aa).

This sequence belongs to the PRA-PH family.

The protein localises to the cytoplasm. The enzyme catalyses 1-(5-phospho-beta-D-ribosyl)-ATP + H2O = 1-(5-phospho-beta-D-ribosyl)-5'-AMP + diphosphate + H(+). The protein operates within amino-acid biosynthesis; L-histidine biosynthesis; L-histidine from 5-phospho-alpha-D-ribose 1-diphosphate: step 2/9. The sequence is that of Phosphoribosyl-ATP pyrophosphatase from Aromatoleum aromaticum (strain DSM 19018 / LMG 30748 / EbN1) (Azoarcus sp. (strain EbN1)).